The sequence spans 128 residues: Glycine cleavage system H protein (128 aa).

Residues 24-106 (VYSVGITEHA…YTDGWLFSIK (83 aa)) enclose the Lipoyl-binding domain. Position 65 is an N6-lipoyllysine (K65).

The protein belongs to the GcvH family. In terms of assembly, the glycine cleavage system is composed of four proteins: P, T, L and H. (R)-lipoate is required as a cofactor.

In terms of biological role, the glycine cleavage system catalyzes the degradation of glycine. The H protein shuttles the methylamine group of glycine from the P protein to the T protein. This is Glycine cleavage system H protein from Yersinia pseudotuberculosis serotype O:1b (strain IP 31758).